The primary structure comprises 1562 residues: DNA-directed RNA polymerase subunit beta'' (1562 aa).

Positions 1–22 are disordered; that stretch reads MVKKKKFKTKNIQNPPFSSQNS. Residues 11 to 22 show a composition bias toward polar residues; that stretch reads NIQNPPFSSQNS. 4 residues coordinate Zn(2+): Cys275, Cys338, Cys345, and Cys348.

The protein belongs to the RNA polymerase beta' chain family. RpoC2 subfamily. In terms of assembly, in plastids the minimal PEP RNA polymerase catalytic core is composed of four subunits: alpha, beta, beta', and beta''. When a (nuclear-encoded) sigma factor is associated with the core the holoenzyme is formed, which can initiate transcription. Zn(2+) is required as a cofactor.

The protein localises to the plastid. It localises to the chloroplast. The catalysed reaction is RNA(n) + a ribonucleoside 5'-triphosphate = RNA(n+1) + diphosphate. DNA-dependent RNA polymerase catalyzes the transcription of DNA into RNA using the four ribonucleoside triphosphates as substrates. In Chlorella vulgaris (Green alga), this protein is DNA-directed RNA polymerase subunit beta''.